A 457-amino-acid polypeptide reads, in one-letter code: Bifunctional protein GlmU (457 aa).

The interval 1–232 (MAKVAAIVLA…PMEVMGVNDR (232 aa)) is pyrophosphorylase. UDP-N-acetyl-alpha-D-glucosamine-binding positions include 9 to 12 (LAAG), Lys23, Gln75, and 80 to 81 (GT). Mg(2+) is bound at residue Asp105. UDP-N-acetyl-alpha-D-glucosamine is bound by residues Gly142, Glu157, Asn172, and Asn230. A Mg(2+)-binding site is contributed by Asn230. The interval 233-253 (VQLAEAGRIIRVRINKALMVA) is linker. The N-acetyltransferase stretch occupies residues 254–457 (GTTIIDPETT…NKEGWKLKNK (204 aa)). Positions 336 and 354 each coordinate UDP-N-acetyl-alpha-D-glucosamine. The active-site Proton acceptor is the His366. Residues Tyr369 and Asn380 each contribute to the UDP-N-acetyl-alpha-D-glucosamine site. Acetyl-CoA contacts are provided by residues 389–390 (NY), Ser408, Ala426, and Arg443.

It in the N-terminal section; belongs to the N-acetylglucosamine-1-phosphate uridyltransferase family. In the C-terminal section; belongs to the transferase hexapeptide repeat family. In terms of assembly, homotrimer. Mg(2+) serves as cofactor.

Its subcellular location is the cytoplasm. The enzyme catalyses alpha-D-glucosamine 1-phosphate + acetyl-CoA = N-acetyl-alpha-D-glucosamine 1-phosphate + CoA + H(+). It catalyses the reaction N-acetyl-alpha-D-glucosamine 1-phosphate + UTP + H(+) = UDP-N-acetyl-alpha-D-glucosamine + diphosphate. The protein operates within nucleotide-sugar biosynthesis; UDP-N-acetyl-alpha-D-glucosamine biosynthesis; N-acetyl-alpha-D-glucosamine 1-phosphate from alpha-D-glucosamine 6-phosphate (route II): step 2/2. Its pathway is nucleotide-sugar biosynthesis; UDP-N-acetyl-alpha-D-glucosamine biosynthesis; UDP-N-acetyl-alpha-D-glucosamine from N-acetyl-alpha-D-glucosamine 1-phosphate: step 1/1. It functions in the pathway bacterial outer membrane biogenesis; LPS lipid A biosynthesis. Catalyzes the last two sequential reactions in the de novo biosynthetic pathway for UDP-N-acetylglucosamine (UDP-GlcNAc). The C-terminal domain catalyzes the transfer of acetyl group from acetyl coenzyme A to glucosamine-1-phosphate (GlcN-1-P) to produce N-acetylglucosamine-1-phosphate (GlcNAc-1-P), which is converted into UDP-GlcNAc by the transfer of uridine 5-monophosphate (from uridine 5-triphosphate), a reaction catalyzed by the N-terminal domain. The polypeptide is Bifunctional protein GlmU (Geotalea daltonii (strain DSM 22248 / JCM 15807 / FRC-32) (Geobacter daltonii)).